We begin with the raw amino-acid sequence, 181 residues long: TATA-box-binding protein (181 aa).

2 consecutive repeat copies span residues 7-83 and 98-173.

This sequence belongs to the TBP family.

In terms of biological role, general factor that plays a role in the activation of archaeal genes transcribed by RNA polymerase. Binds specifically to the TATA box promoter element which lies close to the position of transcription initiation. The chain is TATA-box-binding protein from Methanococcus maripaludis (strain C7 / ATCC BAA-1331).